The following is a 563-amino-acid chain: Arginine--tRNA ligase (563 aa).

The 'HIGH' region motif lies at 120–130 (PNIAKPFHIGH).

This sequence belongs to the class-I aminoacyl-tRNA synthetase family. As to quaternary structure, monomer.

It localises to the cytoplasm. The enzyme catalyses tRNA(Arg) + L-arginine + ATP = L-arginyl-tRNA(Arg) + AMP + diphosphate. This Clostridium botulinum (strain ATCC 19397 / Type A) protein is Arginine--tRNA ligase.